The following is a 350-amino-acid chain: Streptomycin biosynthesis operon possible regulatory protein (350 aa).

Residues 1–10 (MEHISGNSPE) show a composition bias toward polar residues. 3 disordered regions span residues 1–20 (MEHI…AAVT), 168–189 (AGVP…LDPT), and 211–258 (AAQA…SRAD). Basic and acidic residues-rich tracts occupy residues 177–189 (IGRD…LDPT) and 223–242 (DVRK…DRQQ).

In Streptomyces griseus, this protein is Streptomycin biosynthesis operon possible regulatory protein (strR).